The primary structure comprises 693 residues: Polyribonucleotide nucleotidyltransferase (693 aa).

The Mg(2+) site is built by Asp-486 and Asp-492. The region spanning 553-612 (PRIHTIKINPEKIKDVIGKGGSVIRMLTEETGTTIEIEDDGTVKISAVMQEKAKCAIQRI) is the KH domain. The region spanning 622 to 690 (GSVYTGKVTR…RQGRLRLSIK (69 aa)) is the S1 motif domain.

It belongs to the polyribonucleotide nucleotidyltransferase family. As to quaternary structure, component of the RNA degradosome, which is a multiprotein complex involved in RNA processing and mRNA degradation. The cofactor is Mg(2+).

It is found in the cytoplasm. It catalyses the reaction RNA(n+1) + phosphate = RNA(n) + a ribonucleoside 5'-diphosphate. Its function is as follows. Involved in mRNA degradation. Catalyzes the phosphorolysis of single-stranded polyribonucleotides processively in the 3'- to 5'-direction. This chain is Polyribonucleotide nucleotidyltransferase, found in Buchnera aphidicola subsp. Baizongia pistaciae (strain Bp).